The primary structure comprises 694 residues: LMBR1 domain-containing protein 2 homolog (694 aa).

At 1-3 the chain is on the extracellular side; sequence MAY. Residues 4–26 traverse the membrane as a helical segment; sequence LLSFGIVAALFLASISLYRYGNI. Topologically, residues 27–30 are cytoplasmic; the sequence is PRQH. Residues 31-51 traverse the membrane as a helical segment; that stretch reads ILVTLSVLTAWCFSFLIVFTI. Over 52–106 the chain is Extracellular; the sequence is PLDVTSTLYRQCVEEHRPTPAPNVTNTSSATVGPPPQCQEPWGMVPASVFPNLWR. N-linked (GlcNAc...) asparagine glycosylation is found at Asn-74 and Asn-77. Residues 107–127 form a helical membrane-spanning segment; it reads IIYWSSQFLTWLIMPLMQSYL. Topologically, residues 128-144 are cytoplasmic; it reads KAGDFTVKGKLKSALIE. Residues 145-165 traverse the membrane as a helical segment; that stretch reads NAIYYGSYLFICGVLLIYIAV. Residues 166 to 181 lie on the Extracellular side of the membrane; that stretch reads KGESLDWQKLKAIASS. Residues 182 to 202 traverse the membrane as a helical segment; the sequence is ASNTWGLFLLILLLGYALVEV. Residues 203-381 lie on the Cytoplasmic side of the membrane; the sequence is PRSLWNNAKP…ECLLKAPFLK (179 aa). Residues 222–249 are a coiled coil; the sequence is KAAKLSTEKAEAEEHVDDILESLQGLSR. The helical transmembrane segment at 382-402 threads the bilayer; sequence TMCVLTATMSAMVVWSELTFF. Topologically, residues 403–426 are extracellular; sequence SRHPVLSIFANVIYVAKESYDFFT. The chain crosses the membrane as a helical span at residues 427 to 447; that stretch reads IEVFSMVVLCYFFYCTYSTIL. The Cytoplasmic segment spans residues 448-467; it reads RIRFLNLYYLAPHHQTNEHS. Residues 468-488 traverse the membrane as a helical segment; the sequence is LIFSGMLLCRLTPPMCLNFLG. Topologically, residues 489 to 514 are extracellular; the sequence is LIHMDTHIIPNRIMETVYTQIMGHMD. The helical transmembrane segment at 515-535 threads the bilayer; sequence VIGIISNGFNIYFPMCMLAFC. Residues 536–694 are Cytoplasmic-facing; that stretch reads LATWFSLGSR…PPPRGLFDDV (159 aa). A coiled-coil region spans residues 564 to 592; it reads ELVQEGKDLIAREKRRRQRAEEAMARRRD. The disordered stretch occupies residues 673–694; the sequence is DYEAETDGRIVGPPPRGLFDDV.

This sequence belongs to the LIMR family.

It localises to the membrane. In Drosophila melanogaster (Fruit fly), this protein is LMBR1 domain-containing protein 2 homolog.